The chain runs to 223 residues: Pleckstrin homology domain-containing family B member 1 (223 aa).

A PH domain is found at 2-109 (ALVRGGWLWR…WKTALMEANS (108 aa)).

As to quaternary structure, homodimer. Interacts (via PH domain) with MYO1C. Interacts (via PH domain) with MYO7A. Binds transducins. Highly expressed in photoreceptor cells, oligodendrocytes and throughout the myelinated parts of the central nervous system. Detected in brain, liver, kidney, spleen and trachea.

It localises to the membrane. The protein localises to the cytoplasm. In Rattus norvegicus (Rat), this protein is Pleckstrin homology domain-containing family B member 1 (Plekhb1).